A 233-amino-acid chain; its full sequence is 5'-methylthioadenosine/S-adenosylhomocysteine nucleosidase (233 aa).

The active-site Proton acceptor is the Glu12. Substrate contacts are provided by residues Gly78, Ile156, and 177-178 (ME). Catalysis depends on Asp201, which acts as the Proton donor.

It belongs to the PNP/UDP phosphorylase family. MtnN subfamily.

The catalysed reaction is S-adenosyl-L-homocysteine + H2O = S-(5-deoxy-D-ribos-5-yl)-L-homocysteine + adenine. It catalyses the reaction S-methyl-5'-thioadenosine + H2O = 5-(methylsulfanyl)-D-ribose + adenine. It carries out the reaction 5'-deoxyadenosine + H2O = 5-deoxy-D-ribose + adenine. The protein operates within amino-acid biosynthesis; L-methionine biosynthesis via salvage pathway; S-methyl-5-thio-alpha-D-ribose 1-phosphate from S-methyl-5'-thioadenosine (hydrolase route): step 1/2. Its function is as follows. Catalyzes the irreversible cleavage of the glycosidic bond in both 5'-methylthioadenosine (MTA) and S-adenosylhomocysteine (SAH/AdoHcy) to adenine and the corresponding thioribose, 5'-methylthioribose and S-ribosylhomocysteine, respectively. Also cleaves 5'-deoxyadenosine, a toxic by-product of radical S-adenosylmethionine (SAM) enzymes, into 5-deoxyribose and adenine. This Listeria monocytogenes serovar 1/2a (strain ATCC BAA-679 / EGD-e) protein is 5'-methylthioadenosine/S-adenosylhomocysteine nucleosidase.